The sequence spans 439 residues: Histone acetyltransferase GCN5 (439 aa).

Composition is skewed to basic and acidic residues over residues 1 to 28 (MVTK…KLEN) and 39 to 59 (ETNK…KETE). The disordered stretch occupies residues 1–59 (MVTKHQIEEDHLDGATTDPEVKRVKLENNVEEIQPEQAETNKQEGTDKENKGKFEKETE). The region spanning 100–255 (IEFRVVNNDN…GGTLMQCSML (156 aa)) is the N-acetyltransferase domain. Glutamate 173 (proton donor/acceptor) is an active-site residue. Acetyl-CoA-binding positions include 177–179 (CAI), 184–190 (QVRGYGA), and 216–219 (YAIG). The Bromo domain maps to 327–431 (PKRGPHDAAI…KFFNNKVKEI (105 aa)).

The protein belongs to the acetyltransferase family. GCN5 subfamily. Component of the 1.8 MDa SAGA (Spt-Ada-Gcn5 acetyltransferase) complex, which is composed of 19 subunits TRA1, SPT7, TAF5, NGG1/ADA3, SGF73, SPT20/ADA5, SPT8, TAF12, TAF6, HFI1/ADA1, UBP8, GCN5, ADA2, SPT3, SGF29, TAF10, TAF9, SGF11 and SUS1. The SAGA complex is composed of 4 modules, namely the HAT (histone acetyltransferase) module (GCN5, ADA2, NGG1/ADA3 and SGF29), the DUB (deubiquitinating) module (UBP8, SGF11, SGF73 and SUS1), the core or TAF (TBP-associated factor) module (TAF5, TAF6, TAF9, TAF10 and TAF12), and the Tra1 or SPT (Suppressor of Ty) module (TRA1, HFI1/ADA1, SPT3, SPT7, SPT8 and SPT20/ADA5). The Tra1/SPT module binds activators, the core module recruits TBP (TATA-binding protein), the HAT module contains the histone H3 acetyltransferase GCN5, and the DUB module comprises the histone H2B deubiquitinase UBP8. Also identified in an altered form of SAGA, named SALSA (SAGA altered, Spt8 absent) or SLIK (SAGA-like) complex, which contains a C-terminal truncated form of SPT7 and is missing SPT8. However, it has been shown that the SAGA and SAGA-like SALSA/SLIK transcriptional coactivators are structurally and biochemically equivalent. Component of the 0.8 MDa ADA complex, a HAT complex distinct from SAGA, which at least consists of ADA2, NGG1/ADA3, AHC1, AHC2, SGF29 and GCN5. Component of an ADA/GCN5 complex that consists of HFI1/ADA1, ADA2, NGG1/ADA3, SPT20/ADA5 and GCN5 and probably is a subcomplex of SAGA.

The protein resides in the nucleus. It is found in the cytoplasm. It catalyses the reaction L-lysyl-[protein] + acetyl-CoA = N(6)-acetyl-L-lysyl-[protein] + CoA + H(+). It carries out the reaction (2E)-butenoyl-CoA + L-lysyl-[protein] = N(6)-(2E)-butenoyl-L-lysyl-[protein] + CoA + H(+). Histone acetyltransferase that acetylates histone H2B to form H2BK11ac and H2BK16ac, histone H3 to form H3K9ac, H3K14ac, H3K18ac, H3K23ac, H3K27ac and H3K36ac, with a lower preference histone H4 to form H4K8ac and H4K16ac, and contributes to H2A.Z acetylation. Acetylation of histones gives a specific tag for epigenetic transcription activation and elongation. Operates in concert with certain DNA-binding transcriptional activators such as GCN4 or HAP2/3/4. Its acetyltransferase activity seems to be dependent on the association in different multisubunit complexes. Component of the transcription coactivator SAGA complex. SAGA acts as a general cofactor required for essentially all RNA polymerase II transcription. At the promoters, SAGA is required for transcription pre-initiation complex (PIC) recruitment. It influences RNA polymerase II transcriptional activity through different activities such as TBP interaction (via core/TAF module) and promoter selectivity, interaction with transcription activators (via Tra1/SPT module), and chromatin modification through histone acetylation (via HAT module) and deubiquitination (via DUB module). SAGA preferentially acetylates histones H3 (to form H3K9ac, H3K14ac, H3K18ac and H3K23ac) and H2B and deubiquitinates histone H2B. SAGA interacts with DNA via upstream activating sequences (UASs). Also identified in a modified version of SAGA named SALSA or SLIK. The cleavage of SPT7 and the absence of the SPT8 subunit in SLIK neither drive any major conformational differences in its structure compared with SAGA, nor significantly affect HAT, DUB, or DNA-binding activities. Component of the ADA histone acetyltransferase complex, which preferentially acetylates nucleosomal histones H3 (to form H3K14ac and H3K18ac) and H2B. In addition to histone acetyltransferase, can use different acyl-CoA substrates, such as (2E)-butenoyl-CoA (crotonyl-CoA) and is able to mediate histone crotonylation. Controls the metaphase-to-anaphase transition and is required for correct chromosome segregation and centromere/kinetochore function in mitosis. May be involved in response to DNA damage by genotoxic agents. In Saccharomyces cerevisiae (strain ATCC 204508 / S288c) (Baker's yeast), this protein is Histone acetyltransferase GCN5.